A 266-amino-acid chain; its full sequence is Thiazole synthase (266 aa).

Lys-107 acts as the Schiff-base intermediate with DXP in catalysis. Residues Gly-168, 194-195 (AG), and 216-217 (NT) each bind 1-deoxy-D-xylulose 5-phosphate.

This sequence belongs to the ThiG family. As to quaternary structure, homotetramer. Forms heterodimers with either ThiH or ThiS.

Its subcellular location is the cytoplasm. It carries out the reaction [ThiS sulfur-carrier protein]-C-terminal-Gly-aminoethanethioate + 2-iminoacetate + 1-deoxy-D-xylulose 5-phosphate = [ThiS sulfur-carrier protein]-C-terminal Gly-Gly + 2-[(2R,5Z)-2-carboxy-4-methylthiazol-5(2H)-ylidene]ethyl phosphate + 2 H2O + H(+). It functions in the pathway cofactor biosynthesis; thiamine diphosphate biosynthesis. Catalyzes the rearrangement of 1-deoxy-D-xylulose 5-phosphate (DXP) to produce the thiazole phosphate moiety of thiamine. Sulfur is provided by the thiocarboxylate moiety of the carrier protein ThiS. In vitro, sulfur can be provided by H(2)S. In Azorhizobium caulinodans (strain ATCC 43989 / DSM 5975 / JCM 20966 / LMG 6465 / NBRC 14845 / NCIMB 13405 / ORS 571), this protein is Thiazole synthase.